Here is a 361-residue protein sequence, read N- to C-terminus: S-adenosylmethionine:tRNA ribosyltransferase-isomerase (361 aa).

The protein belongs to the QueA family. In terms of assembly, monomer.

Its subcellular location is the cytoplasm. It carries out the reaction 7-aminomethyl-7-carbaguanosine(34) in tRNA + S-adenosyl-L-methionine = epoxyqueuosine(34) in tRNA + adenine + L-methionine + 2 H(+). It functions in the pathway tRNA modification; tRNA-queuosine biosynthesis. Transfers and isomerizes the ribose moiety from AdoMet to the 7-aminomethyl group of 7-deazaguanine (preQ1-tRNA) to give epoxyqueuosine (oQ-tRNA). The protein is S-adenosylmethionine:tRNA ribosyltransferase-isomerase of Actinobacillus pleuropneumoniae serotype 7 (strain AP76).